We begin with the raw amino-acid sequence, 678 residues long: MAGKKLKKGKSGNAAQYITRTQAVRKLQLRLSEFRRLCILKGVHPREPKKKPKGANKTYYHLKDINWLAHEPLLNTFRSIKAHDKKVRKARAKQNKELAKRLAALTPTYRLDHLVKERYPSFVDALRDLDDSLTMVHLFATLPAESKYDIPQRTVQLCRRLALEWQAYVVRSGALRRVFVSVKGYYFQAEILGQSVTWLVPHALSQVLPPDVDYKVMLTFLEFYNTLLQFVNFKLYHNLGAALPSLRVYPLFSQLRYPPVLDPRLEEAAAELAAIMKDIAGMEEEEPEEVDSEAGDEDDDDLPVLDSGTRRRRAAAAGPAPRRWRCWVRTTRTRMTTCRWVSDRAGGACGPGVDPSDEAAVCGSLFRGRVFFLGREVPREPLMLVIRAFGGVAAWDGDGSPHAETDEAVTHQIVDRPKQGHKFLSREYVQPQWVFDSANFRVLMPTDLYAPGTVPPPHLSPFVGEADEDGYTPDFAKTVRRLQDAANAARLRAAGLALKGADGSEFVGEGADGAAAADGEGAAGEDLAAAERQYASELAKEDEEAAMADIMMTRKARKMYNNMKQKEAAKQERVQQLESKKAKLAATGAAGPMGQVKPAAAGKAAAAKAAAPAKVAASGGKGAAAKGKEAPAPAKGKGTPAAKGKEAPAPAKGKGAAAAKEAPAKGGKDAAPAKRQRR.

Over residues 283–303 (EEEEPEEVDSEAGDEDDDDLP) the composition is skewed to acidic residues. The tract at residues 283–316 (EEEEPEEVDSEAGDEDDDDLPVLDSGTRRRRAAA) is disordered. The BRCT domain maps to 361–451 (VCGSLFRGRV…VLMPTDLYAP (91 aa)). Residues 552–587 (MTRKARKMYNNMKQKEAAKQERVQQLESKKAKLAAT) are a coiled coil. The disordered stretch occupies residues 563 to 678 (MKQKEAAKQE…DAAPAKRQRR (116 aa)). Residues 564-581 (KQKEAAKQERVQQLESKK) show a composition bias toward basic and acidic residues. Low complexity-rich tracts occupy residues 597-618 (KPAA…VAAS) and 630-661 (APAP…AAKE). The segment covering 662–672 (APAKGGKDAAP) has biased composition (basic and acidic residues).

It belongs to the pescadillo family.

Its subcellular location is the nucleus. It is found in the nucleolus. The protein localises to the nucleoplasm. Its function is as follows. Required for maturation of ribosomal RNAs and formation of the large ribosomal subunit. In Chlamydomonas reinhardtii (Chlamydomonas smithii), this protein is Pescadillo homolog.